The following is a 2043-amino-acid chain: MASFFQSFRSSSMAKQLLRFALSRLDLLDTQALDLENLDFALGRNTVLEFRDVGLILQKLERLLGLPPAFSLQKAKVLILRVTIPMDFYASPITAEIDGVDIRLKVASKKEKDRQDAGKRGKGMAGSEAVPTAADLAQSFLETQPVAEKEELEQALAAETQDLAASMAASEPESDDDSPVGTGQPLSLPVFLTNFLHGIVDRIQIRVQSVTFQADVEVAVDSNSPVPEPVTFQLSLDNINVEGVTSTSETPDEASTIVHKEGKRHVLLDNIRAALITETNVLSSLARSASMPSSSASRSPVAPRSPVDNETTAFNPSGLSRSVGSSAMAGSRDSSDDLPQSQHLQDNEAAFNIPYDFGDSNEPNEADEASPLSTPRASLYRGSPPPTITDHAKSAVLEPSPLIWSTAEREAQSVPFLRPPEGFPLSNDPSPAASVHSSSTNRSSGSSARDDLAESHIYSHEDAESMYMSAFSQTGSQGLRTGMPGAWDAFDDAEESETEAGPSTSTQAAPYDGSFDPPQPDRIPSPEQPSQDQKRNSPSFYAQDSSAEVPEPPQDDIPTPRGPTRLVKQLLSLSSISIYLPSSHKHVKIDTPDDGKSISPNIPGAFSMHSAAATSPKPTPADEPAGETTPIDPSIEIVLKPVEIQFDASIGFLLAMVVAQLLEAAQGGSKDAAGPTAAKPPSASPDVKVTVEQLSVLFLEKLAGVADVPQRFFEKSTPDLSSDVLLQAQVVDLRGSVSHDGPQTEMDFSIEKLKFGYANDDIVSFDRSVLMFESVANTFPSAGQDISVKATMGPEISRLEVNTLPLYVQLDLQKLDEVFGWFGGLSSFLNMGTSITANTSRADKSPANPVQKPKGVRFDEPVHPDDQAVTRENKTDLRINGLQVDVLGKDCSVMLNTSAFKLVSREGGIGIHLSRIRLSGPYFKNSRAEPPIVSEVLDTRVEFLPSPRAKDLERLLELITPSSNKFDEDEDEIMVDTLLRQRRKGSVLSLAIGKVRFDAGNLPQLTCLPSLIDDLAKLGTVAKYLPEDDRPGLLTLCHVKNAECRVDFGGRFGAILTSLTDLEVAHISMPQLAAVALGEIAVTRNKIEELVVTSPPPQTGPWQNLPVFRLRLIDDMEPVLKIKLMGLGLEYRVPTIMDLLNLGQDVTPEDYEAGLAASVASLGEQAHTVIKRASSGSLTSTGQAKAPRSLKVDVAFRDCLIGLNPLALPSKLTVALTDAHLEMVPGPQELVAVTTMKRVSVLLIDDISILESPGVRFTTSRRPPVVISTQVAELCTMGYVNICQISSAKATVTVSRDSQGDTQLEVEVRDDLLVLETCADSTQTLITLANALTPPTPPSTEIKYRTTVFPVEDLLASIRAETFGRAEGEYDLDNDFDVPQELGDDADSDLDFDAGPSDSPLNLDSQYLEENIVQEELFDATSSSMLREGATKFEDTNDGVLLSTAGLDNPSSSGLEISSSDLSITDDYFDKGPVGRGTAHRWDSKTDRYDQHNEIKLQRSPLKLCVRDVHVIWHLFDGYDWERTREVIAKAVKEVEAKAYERRAKTDRRGGFDPEFGEDEPIIGDCLFNSIYIGIPSNRDPKELAQAINHGLHDFGDTESIATSTVTTSTLRAAGQRRRSKSLRLDRSRRHKITFELKGVSADVVMFPPGSGETVNSLDIRLRDVDVFDHVPESTWKKFATYDLDAGERELGADMVHAEIITTKPADTPATEMVISATILPLRLHVDQDALDFITRFFTFRDETAPIHASPSDVPFIQRIVVNSIPIQLDFKPKRVDYAGLRSGKTTEFMNFMILEGARLVLRRVILYGVSGFDRLGDQLNDIWTVDVKRNQLPGVLAGLAPVRSLVNAGSGFRDLIEIPIREYRKDGRIVRSLRKGATAFAKTTGTEVVKLGAKLAIGTQNVLQGAEGLLVPQTGESSSNAAAVAAVLGDDWDEAEYEEEINRKFSLYADQPLGIVQGVRGAYASLARDLSVARDAIIAVPAEIMESEGAQGAAAAVLKKAPTIILRPAIGATKAIGQTLLGATNSLDPMHRKRVDAKYKKH.

8 disordered regions span residues 111-130 (EKDRQDAGKRGKGMAGSEAV), 288-341 (SASM…LPQS), 353-392 (IPYDFGDSNEPNEADEASPLSTPRASLYRGSPPPTITDHA), 413-458 (SVPF…SHIY), 469-488 (SAFSQTGSQGLRTGMPGAWD), 493-563 (AEES…PRGP), 839-863 (TSRADKSPANPVQKPKGVRFDEPVH), and 1370-1400 (YDLDNDFDVPQELGDDADSDLDFDAGPSDSP). The segment covering 288 to 306 (SASMPSSSASRSPVAPRSP) has biased composition (low complexity). A compositionally biased stretch (polar residues) spans 308 to 325 (DNETTAFNPSGLSRSVGS). Residues 434-447 (SVHSSSTNRSSGSS) are compositionally biased toward low complexity. Residues 448-458 (ARDDLAESHIY) are compositionally biased toward basic and acidic residues. Positions 470–479 (AFSQTGSQGL) are enriched in polar residues. A compositionally biased stretch (pro residues) spans 517-527 (PPQPDRIPSPE). A compositionally biased stretch (polar residues) spans 528-546 (QPSQDQKRNSPSFYAQDSS). Over residues 1370-1392 (YDLDNDFDVPQELGDDADSDLDF) the composition is skewed to acidic residues.

It belongs to the ATG2 family.

Its subcellular location is the preautophagosomal structure membrane. The protein resides in the endoplasmic reticulum membrane. The enzyme catalyses a 1,2-diacyl-sn-glycero-3-phosphocholine(in) = a 1,2-diacyl-sn-glycero-3-phosphocholine(out). It catalyses the reaction a 1,2-diacyl-sn-glycero-3-phospho-L-serine(in) = a 1,2-diacyl-sn-glycero-3-phospho-L-serine(out). The catalysed reaction is a 1,2-diacyl-sn-glycero-3-phosphoethanolamine(in) = a 1,2-diacyl-sn-glycero-3-phosphoethanolamine(out). Its function is as follows. Lipid transfer protein required for autophagosome completion and peroxisome degradation. Tethers the edge of the isolation membrane (IM) to the endoplasmic reticulum (ER) and mediates direct lipid transfer from ER to IM for IM expansion. ATG2 binds to the ER exit site (ERES), which is the membrane source for autophagosome formation, using basic residues in its N-terminal region (NR) and to the expanding edge of the IM through its C-terminal region. The latter binding is assisted by an ATG18-PtdIns3P interaction. ATG2 then extracts phospholipids from the membrane source using its NR and transfers them to ATG9 to the IM through its predicted beta-sheet-rich structure for membrane expansion. This Chaetomium globosum (strain ATCC 6205 / CBS 148.51 / DSM 1962 / NBRC 6347 / NRRL 1970) (Soil fungus) protein is Autophagy-related protein 2 (ATG2).